The chain runs to 369 residues: Translocating chain-associated membrane protein 1-like 1 (369 aa).

At 1-29 (MGLRKKSTKNPPVLSQEFILQNHADIVSC) the chain is on the cytoplasmic side. The helical transmembrane segment at 30–50 (VGMFFLLGLVFEGTAEASIVF) threads the bilayer. At 51-81 (LTLQHSVAVPAAEEQATGSKSLYYYGVKDLA) the chain is on the lumenal side. A helical transmembrane segment spans residues 82–102 (TVFFYMLVAIIIHATIQEYVL). The Cytoplasmic portion of the chain corresponds to 103–121 (DKINKRMQFTKAKQNKFNE). Positions 117 to 326 (NKFNESGQFS…TLWLQRWVED (210 aa)) constitute a TLC domain. Residues 122 to 142 (SGQFSVFYFFSCIWGTFILIS) traverse the membrane as a helical segment. Residues 143–164 (ENCLSDPTLIWKARPHSMMTFQ) lie on the Lumenal side of the membrane. Residues 165-185 (MKFFYISQLAYWFHAFPELYF) form a helical membrane-spanning segment. The Cytoplasmic segment spans residues 186–196 (QKTKKQDIPRQ). A helical membrane pass occupies residues 197–215 (LVYIGLHLFHITGAYLLYL). Residues 216–219 (NHLG) lie on the Lumenal side of the membrane. Residues 220-242 (LLLLVLHYFVELLSHMCGLFYFS) form a helical membrane-spanning segment. Over 243–249 (DEKYQKG) the chain is Cytoplasmic. Residues 250-270 (ISLWAIVFILGRLVTLIVSVL) traverse the membrane as a helical segment. Residues 271 to 297 (TVGFHLAGSQNRNPDALTGNVNVLAAK) are Lumenal-facing. Residues 298-318 (IAVLSSSCTIQAYVTWNLITL) traverse the membrane as a helical segment. Over 319 to 369 (WLQRWVEDSNIQASCMKKKRSRSSKKRTENGVGVETSNRVDCPPKRKEKSS) the chain is Cytoplasmic. The disordered stretch occupies residues 335 to 369 (KKKRSRSSKKRTENGVGVETSNRVDCPPKRKEKSS). Basic and acidic residues predominate over residues 360 to 369 (CPPKRKEKSS).

The protein belongs to the TRAM family.

The protein localises to the endoplasmic reticulum membrane. In terms of biological role, stimulatory or required for the translocation of secretory proteins across the ER membrane. The chain is Translocating chain-associated membrane protein 1-like 1 (TRAM1L1) from Homo sapiens (Human).